The sequence spans 330 residues: GDP-mannose transporter (330 aa).

The Cytoplasmic portion of the chain corresponds to 1–13 (MSQLKVDNGPLSH). A helical membrane pass occupies residues 14–34 (VANSGPISIGAYCFSSIMMTV). The Lumenal portion of the chain corresponds to 35–48 (TNKFVVNLKGFNMN). The chain crosses the membrane as a helical span at residues 49–69 (FVMLFVQAAVCVNLLFFLRLL). The Cytoplasmic segment spans residues 70–81 (GYAKFRPLNRTD). A helical transmembrane segment spans residues 82–98 (AKNWFPITIFLVLMIYT). Residues 99–104 (SSKSLQ) are Lumenal-facing. The helical transmembrane segment at 105–124 (YLAVPIYTIFKNLTIILIAY) threads the bilayer. Topologically, residues 125-138 (GEVLFFGGSVTAME) are cytoplasmic. The chain crosses the membrane as a helical span at residues 139–155 (LSSFLLMVLSSVVATLG). The Lumenal portion of the chain corresponds to 156-170 (DQQALKKTADAGASL). The chain crosses the membrane as a helical span at residues 171–191 (FNIGYMWMFINCLSSAAFVLV). The Cytoplasmic portion of the chain corresponds to 192-203 (MRKRIKLTNFKD). The chain crosses the membrane as a helical span at residues 204-224 (FDTMFYNNILSMPVLLALSFL). The Lumenal segment spans residues 225-241 (MEDWSTENLTKNLSRDS). A helical transmembrane segment spans residues 242–262 (VTAMIISGMTAVCISYCSGWC). The Cytoplasmic segment spans residues 263-269 (VRVTSST). Residues 270 to 290 (TYSMVGALNKLPIALSGLIFF) traverse the membrane as a helical segment. Over 291–294 (DAPK) the chain is Lumenal. The chain crosses the membrane as a helical span at residues 295–315 (NFLSIFSIFLGFLSGIVYAVA). Residues 316-330 (KQKKQQNPQPSAPIK) are Cytoplasmic-facing.

Belongs to the TPT transporter family. SLC35D subfamily. Homooligomer.

Its subcellular location is the golgi apparatus membrane. The protein resides in the cytoplasmic vesicle membrane. It localises to the endoplasmic reticulum membrane. Functionally, involved in the import of GDP-mannose from the cytoplasm into the Golgi lumen. The polypeptide is GDP-mannose transporter (VRG4) (Kluyveromyces lactis (strain ATCC 8585 / CBS 2359 / DSM 70799 / NBRC 1267 / NRRL Y-1140 / WM37) (Yeast)).